Consider the following 147-residue polypeptide: UPF0306 protein YPK_3704 (147 aa).

This sequence belongs to the UPF0306 family.

The polypeptide is UPF0306 protein YPK_3704 (Yersinia pseudotuberculosis serotype O:3 (strain YPIII)).